We begin with the raw amino-acid sequence, 491 residues long: Meiosis-specific nuclear structural protein 1 (491 aa).

The segment at 1–314 (MATKKRALSF…QLEETLRQRD (314 aa)) is interaction with BBOF1. Coiled-coil stretches lie at residues 29-253 (QVMN…RAQD) and 287-410 (RVHE…AVEK). Position 188 is a phosphotyrosine (Y188).

This sequence belongs to the MNS1 family. Able to form oligomers. Microtubule inner protein component of sperm flagellar doublet microtubules. Interacts with ODAD1. Interacts with BBOF1. As to expression, high expression in testis. Expressed in pachytene spermatocytes and post-meiotic spermatids.

It localises to the nucleus. Its subcellular location is the cytoplasm. The protein resides in the cytoskeleton. The protein localises to the flagellum axoneme. It is found in the cilium axoneme. Its function is as follows. Microtubule inner protein (MIP) part of the dynein-decorated doublet microtubules (DMTs) in cilia axoneme, which is required for motile cilia beating. May play a role in the control of meiotic division and germ cell differentiation through regulation of pairing and recombination during meiosis. Required for sperm flagella assembly. May play a role in the assembly and function of the outer dynein arm-docking complex (ODA-DC). ODA-DC mediates outer dynein arms (ODA) binding onto the axonemal doublet microtubules. The polypeptide is Meiosis-specific nuclear structural protein 1 (Mns1) (Mus musculus (Mouse)).